Reading from the N-terminus, the 461-residue chain is MSRLLFIALPLLVLASIPLYLLVLKSPPPMPKLDLEEWWGPPELKQKQDTSIKPFEITFSETMVKELKERIKKRRPFAPPLEGVGFKYGFNSKQLDSWLKYWAEEYPFAERQKFLNQYPHFKTNIQGLNIHFMRITPKVPKDVEIVPLLLLHGWPGSVREFYEAIPHLTAVSRDRNFALEIIAPSLPGYGFSDAAVRPGLAAAEVAVIFKNLMARLGYKQYYVQGGDWGALIGSAMATSFPKEIIGFHSYMALTLSPAATFLEFVGALFPSLIVEPELANRLYPLSEKYSTLLEELGYMHIQATKPDTVGIGLTDSPAGLLAYILEKFSTWTNPDLRSKEDGGLSYRWTKDQLIDNLMLYWSTKSIVTSMRLYAESFSSRHFDLKLDEIQVQVPTWVLQAKHELAYQPPCILKLKYTKLVNASVIEDGGHFLAFELPEIFAKDVLKAIGEFRKLKNVKTEL.

A helical membrane pass occupies residues 4–24 (LLFIALPLLVLASIPLYLLVL). The active-site Nucleophile is the Asp227. The active-site Proton donor is the Tyr373. The active-site Proton acceptor is the His430.

It belongs to the peptidase S33 family. As to quaternary structure, homodimer. In terms of tissue distribution, expressed in fat body, foregut and midgut but not in brain, subesophageal ganglia or silk gland of larvae on day 1 of fifth instar.

It is found in the microsome membrane. The protein localises to the endoplasmic reticulum membrane. The enzyme catalyses cis-stilbene oxide + H2O = (1R,2R)-hydrobenzoin. It carries out the reaction 1-(4-methoxyphenyl)-N-methyl-N-[(3-methyloxetan-3-yl)methyl]methanamine + H2O = 2-{[(4-methoxybenzyl)(methyl)amino]methyl}-2-methylpropane-1,3-diol. Its function is as follows. Catalyzes juvenile hormone hydrolysis. Degrades juvenile hormone III (JH III) about 3 times and 5 times slower than juvenile hormone I (JH I) and II (JH II), respectively. Degrades cis-stilbene oxide and trans-stilbene oxide about 18 and 43 times slower than JH III, respectively. This is Juvenile hormone epoxide hydrolase from Bombyx mori (Silk moth).